The primary structure comprises 374 residues: tRNA-specific 2-thiouridylase MnmA (374 aa).

ATP contacts are provided by residues 15–22 and M41; that span reads GMSGGVDS. Residues 101-103 are interaction with target base in tRNA; the sequence is NPD. C106 acts as the Nucleophile in catalysis. A disulfide bond links C106 and C206. ATP is bound at residue G130. Residues 156–158 form an interaction with tRNA region; the sequence is KDQ. The Cysteine persulfide intermediate role is filled by C206. The tract at residues 324-325 is interaction with tRNA; the sequence is RY.

This sequence belongs to the MnmA/TRMU family.

The protein localises to the cytoplasm. The catalysed reaction is S-sulfanyl-L-cysteinyl-[protein] + uridine(34) in tRNA + AH2 + ATP = 2-thiouridine(34) in tRNA + L-cysteinyl-[protein] + A + AMP + diphosphate + H(+). Catalyzes the 2-thiolation of uridine at the wobble position (U34) of tRNA, leading to the formation of s(2)U34. This is tRNA-specific 2-thiouridylase MnmA from Aromatoleum aromaticum (strain DSM 19018 / LMG 30748 / EbN1) (Azoarcus sp. (strain EbN1)).